Here is a 467-residue protein sequence, read N- to C-terminus: MREIVHIQAGQCGNQIGAKFWEVISDEHGIDPTGSYHGESDLQLERINVYYNEATGGKYVPRAVLVDLEPGTMDSVRAGPFGQIFRPDNFVFGQTGAGNNWAKGHYTEGAELIDSVLDVVRKEAESCDCLQGFQIAHSLGGGTGSGMGTLLISKIREEYPDRMMCTFSVVPSPKVSDTVVEPYNATLSVHQLVENADEVMCIDNEALYDISFRTLKLTTPTYGDLNHLVSAVMSGITCCLRFPGQLNSDLRKLAVNLIPFPRLHFFLVGFAPLTSRGSVGYRSLTVPELTQQMFDAKNMMAASDPRHGRYLTASAMFRGRMSTKEVDEQMLNVQNKNSSYFVEWIPNNIKSSVCDIPPKGLKMAVTFIGNSTAIQELFKRVSEQFTAMFRRKAFLHWYTGEGMDEMEFTEAESNMNDLVSEYQQYQDATIDDEEGGEEEEGGAEEEARQRKHYVIDYVPSVCVILIR.

8 residues coordinate GTP: glutamine 11, glutamate 69, serine 138, glycine 142, threonine 143, glycine 144, asparagine 204, and asparagine 226. Residue glutamate 69 participates in Mg(2+) binding. The segment covering threonine 429–glutamate 444 has biased composition (acidic residues). A disordered region spans residues threonine 429 to arginine 448.

Belongs to the tubulin family. Dimer of alpha and beta chains. A typical microtubule is a hollow water-filled tube with an outer diameter of 25 nm and an inner diameter of 15 nM. Alpha-beta heterodimers associate head-to-tail to form protofilaments running lengthwise along the microtubule wall with the beta-tubulin subunit facing the microtubule plus end conferring a structural polarity. Microtubules usually have 13 protofilaments but different protofilament numbers can be found in some organisms and specialized cells. The cofactor is Mg(2+).

Its subcellular location is the cytoplasm. The protein localises to the cytoskeleton. It localises to the spindle. It is found in the nucleus. Tubulin is the major constituent of microtubules, a cylinder consisting of laterally associated linear protofilaments composed of alpha- and beta-tubulin heterodimers. Microtubules grow by the addition of GTP-tubulin dimers to the microtubule end, where a stabilizing cap forms. Below the cap, tubulin dimers are in GDP-bound state, owing to GTPase activity of alpha-tubulin. This chain is Tubulin beta-1 chain (BETA), found in Physarum polycephalum (Slime mold).